Consider the following 285-residue polypeptide: Purine biosynthesis transcriptional repressor PurR (285 aa).

A DNA binding domain region spans residues 1-73 (MKFRRSGRLV…GAAGGVKYIP (73 aa)). Residues 74–285 (KMKQAEAEEF…NLLKNGETES (212 aa)) are effector binding domain. Guanosine 3',5'-bis(diphosphate) is bound at residue Y102. 4 residues coordinate 5-phospho-alpha-D-ribose 1-diphosphate: A138, T139, K140, and R160. Residues G178 and S179 each contribute to the guanosine 3',5'-bis(diphosphate) site. 5-phospho-alpha-D-ribose 1-diphosphate-binding residues include D203, D204, F205, K207, and A208. Residue K207 participates in guanosine 3',5'-bis(diphosphate) binding. Residues G209, G210, and T211 each contribute to the guanosine 3',5'-bis(diphosphate) site. Residue T211 participates in 5-phospho-alpha-D-ribose 1-diphosphate binding.

Belongs to the purine/pyrimidine phosphoribosyltransferase family. PurR subfamily. As to quaternary structure, homodimer.

The binding of PurR to DNA, and therefore the repressor activity, is influenced by interaction with the effector molecules 5-phosphoribosyl 1-pyrophosphate (PRPP) and (p)ppGpp. PRPP binds to PurR and reduces affinity of PurR for DNA, which inhibits the repressor activity and induces transcription of the target genes. On the contrary, (p)ppGpp enhances binding of PurR to DNA and repression of the transcription. PRPP and (p)ppGpp compete for PurR binding and allosteric control of transcription. ppGpp maintains PurR-DNA interaction and prevents PRPP from de-repressing PurR regulation during conditions that lead to (p)ppGpp induction, such as upon amino acid starvation. Functionally, DNA-binding transcriptional repressor that controls the expression of a number of genes involved in the synthesis, metabolism and transport of purines. In response to a signal of excess adenine, represses the transcription of the pur operon, which encodes enzymes of the purine biosynthetic pathway. It also represses the expression of the purA and purR genes. In addition, controls the expression of several other genes or operons, which encode enzymes or transporters playing a role in purine nucleotide metabolism. Acts by binding directly to specific DNA sequences, named PurBoxes, in the upstream control regions of affected genes. Two PurBoxes are required for high-affinity PurR binding. Also responds to amino acid starvation via (p)ppGpp, which strongly increases PurR activity and repression of purine nucleotide biosynthesis genes. This Bacillus subtilis (strain 168) protein is Purine biosynthesis transcriptional repressor PurR.